The primary structure comprises 555 residues: Bifunctional epoxide hydrolase 2 (555 aa).

Residues 1–224 form a phosphatase region; the sequence is MTLRAAVFDL…KVTGIQLLNT (224 aa). 2 residues coordinate Mg(2+): Asp9 and Asp11. N6-acetyllysine is present on Lys43. Lys55 carries the post-translational modification N6-succinyllysine. Position 123–124 (123–124) interacts with phosphate; sequence TN. Asp185 lines the Mg(2+) pocket. N6-acetyllysine is present on residues Lys191 and Lys215. The tract at residues 235 to 555 is epoxide hydrolase; it reads SDMSHGYVTV…ARNPPVVSKM (321 aa). One can recognise an AB hydrolase-1 domain in the interval 259-531; that stretch reads PAVCLCHGFP…CGHWTQMDKP (273 aa). Asp335 serves as the catalytic Nucleophile. Ser370 carries the post-translational modification Phosphoserine. Tyr383 contacts substrate. Residues Lys421 and Lys455 each carry the N6-succinyllysine modification. Tyr466 acts as the Proton donor in catalysis. Cys522 is lipidated: S-(15-deoxy-Delta12,14-prostaglandin J2-9-yl)cysteine. Residue His524 is the Proton acceptor of the active site. Positions 553–555 match the Microbody targeting signal motif; sequence SKM. Lys554 is modified (N6-succinyllysine).

It belongs to the AB hydrolase superfamily. Epoxide hydrolase family. In terms of assembly, homodimer. Requires Mg(2+) as cofactor. The N-terminus is blocked. In terms of processing, the covalent modification of cysteine by 15-deoxy-Delta12,14-prostaglandin-J2 is autocatalytic and reversible. It may occur as an alternative to other cysteine modifications, such as S-nitrosylation and S-palmitoylation.

It is found in the cytoplasm. The protein localises to the peroxisome. It catalyses the reaction an epoxide + H2O = an ethanediol. The catalysed reaction is (9S,10S)-10-hydroxy-9-(phosphooxy)octadecanoate + H2O = (9S,10S)-9,10-dihydroxyoctadecanoate + phosphate. It carries out the reaction 12-phosphooxy-(9Z)-octadecenoate + H2O = 12-hydroxy-(9Z)-octadecenoate + phosphate. The enzyme catalyses 12-phosphooxy-(9E)-octadecenoate + H2O = 12-hydroxy-(9E)-octadecenoate + phosphate. It catalyses the reaction 12-(phosphooxy)octadecanoate + H2O = 12-hydroxyoctadecanoate + phosphate. The catalysed reaction is 8,9-epoxy-(5Z,11Z,14Z)-eicosatrienoate + H2O = 8,9-dihydroxy-(5Z,11Z,14Z)-eicosatrienoate. It carries out the reaction 11,12-epoxy-(5Z,8Z,14Z)-eicosatrienoate + H2O = 11,12-dihydroxy-(5Z,8Z,14Z)-eicosatrienoate. The enzyme catalyses 14,15-epoxy-(5Z,8Z,11Z)-eicosatrienoate + H2O = 14,15-dihydroxy-(5Z,8Z,11Z)-eicosatrienoate. It catalyses the reaction 9,10-epoxy-(12Z)-octadecenoate + H2O = 9,10-dihydroxy-(12Z)-octadecenoate. The catalysed reaction is 8-hydroxy-(11S,12S)-epoxy-(5Z,9E,14Z)-eicosatrienoate + H2O = (8,11R,12S)-trihydroxy-(5Z,9E,14Z)-eicosatrienoate. It carries out the reaction 10-hydroxy-(11S,12S)-epoxy- (5Z,8Z,14Z)-eicosatrienoate + H2O = (10,11S,12R)-trihydroxy-(5Z,8Z,14Z)-eicosatrienoate. The enzyme catalyses 1-tetradecanoyl-sn-glycerol 3-phosphate + H2O = 1-tetradecanoyl-sn-glycerol + phosphate. It catalyses the reaction 1-octadecanoyl-sn-glycero-3-phosphate + H2O = 1-octadecanoyl-sn-glycerol + phosphate. The catalysed reaction is 1-(5Z,8Z,11Z,14Z-eicosatetraenoyl)-sn-glycero-3-phosphate + H2O = 1-(5Z,8Z,11Z,14Z-eicosatetraenoyl)-sn-glycerol + phosphate. It carries out the reaction 1-hexadecanoyl-sn-glycero-3-phosphate + H2O = 1-hexadecanoyl-sn-glycerol + phosphate. The enzyme catalyses 1-(9Z-octadecenoyl)-sn-glycero-3-phosphate + H2O = 1-(9Z-octadecenoyl)-sn-glycerol + phosphate. It catalyses the reaction (8S,9R)-epoxy-(5Z,11Z,14Z)-eicosatrienoate + H2O = (8S,9S)-dihydroxy-(5Z,11Z,14Z)-eicosatrienoate. The catalysed reaction is (11S,12R)-epoxy-(5Z,8Z,14Z)-eicosatrienoate + H2O = (11R,12R)-dihydroxy-(5Z,8Z,14Z)-eicosatrienoate. It carries out the reaction (11S,12R)-epoxy-(5Z,8Z,14Z)-eicosatrienoate + H2O = (11S,12S)-dihydroxy-(5Z,8Z,14Z)-eicosatrienoate. The enzyme catalyses (14S,15R)-epoxy-(5Z,8Z,11Z)-eicosatrienoate + H2O = (14R,15R)-dihydroxy-(5Z,8Z,11Z)-eicosatrienoate. It catalyses the reaction (14S,15R)-epoxy-(5Z,8Z,11Z)-eicosatrienoate + H2O = (14S,15S)-dihydroxy-(5Z,8Z,11Z)-eicosatrienoate. The catalysed reaction is (11R,12S)-epoxy-(5Z,8Z,14Z)-eicosatrienoate + H2O = (11S,12S)-dihydroxy-(5Z,8Z,14Z)-eicosatrienoate. It carries out the reaction (11R,12S)-epoxy-(5Z,8Z,14Z)-eicosatrienoate + H2O = (11R,12R)-dihydroxy-(5Z,8Z,14Z)-eicosatrienoate. The enzyme catalyses (8S,9R)-epoxy-(5Z,11Z,14Z)-eicosatrienoate + H2O = (8R,9R)-dihydroxy-(5Z,11Z,14Z)-eicosatrienoate. It catalyses the reaction (14R,15S)-epoxy-(5Z,8Z,11Z)-eicosatrienoate + H2O = (14R,15R)-dihydroxy-(5Z,8Z,11Z)-eicosatrienoate. Inhibited by 1-(1-acetylpiperidin-4-yl)-3-(4-(trifl uoromethoxy)phenyl)urea (TPAU), 1-cyclohexyl-3-dodecylurea (CDU), 12-(3-adamantan-1-yl-ureido)-dodecanoic acid (AUDA), 1-((3S, 5S, 7S)-adamantan-1-yl)-3-(5-(2-(2-ethoxyethoxy) ethoxy)pentyl)urea (AEPU), N-adamantyl-N[']-cyclohexyl urea (ACU), 4-(((1S, 4S)-4-(3-((3S, 5S, 7S)-adamantan-1-yl) ureido)cyclohexyl)oxy)benzoic acid (c-AUCB), 4-(((1R, 4R)-4-(3-((3S, 5S, 7S)-adamantan-1-yl)ureido)cyclohexyl)oxy)benzoic acid (t-AUCB), 4-(((1R, 4R)-4-(3-(4(trifluoromethoxy)phenyl)ureido)cyclohexyl)oxy)benzoic acid (t-TAUCB) and to a lesser extent by 8-(3-((3S, 5S, 7S)-adamantan-1-yl)ureido) octanoic acid (AUOA). Phosphatase activity is inhibited by dodecyl-phosphate, phospholipids such as phospho-lysophosphatidic acids and fatty acids such as palmitic acid and lauric acid. Its function is as follows. Bifunctional enzyme. The C-terminal domain has epoxide hydrolase activity and acts on epoxides (alkene oxides, oxiranes) and arene oxides. Plays a role in xenobiotic metabolism by degrading potentially toxic epoxides. Also determines steady-state levels of physiological mediators. Bifunctional enzyme. The N-terminal domain has lipid phosphatase activity, with the highest activity towards threo-9,10-phosphonooxy-hydroxy-octadecanoic acid, followed by erythro-9,10-phosphonooxy-hydroxy-octadecanoic acid, 12-phosphonooxy-octadec-9Z-enoic acid and 12-phosphonooxy-octadec-9E-enoic acid. Has phosphatase activity toward lyso-glycerophospholipids with also some lower activity toward lysolipids of sphingolipid and isoprenoid phosphates. The polypeptide is Bifunctional epoxide hydrolase 2 (Homo sapiens (Human)).